We begin with the raw amino-acid sequence, 229 residues long: MAQFTLWSHAHGPNPWKVVQALKELDLTYETRYVNFSKNEQKSPEHLALNPNGRVPTLIDHHNNDYTIWESDAILIYLADKYDTERKISLPRDHPEYYKVIQYLFFQASGQGIIWGQAGWFSVYHQELVISAITRYRNEIKRVLGVLEDILKDRDYLVANRFTIADLSFISWNNFLEIIFAEGKFSIEEEVPQLDFEKEFPRTYSWHQRLLARPASKATFEERSKALDN.

The region spanning 2 to 86 (AQFTLWSHAH…YLADKYDTER (85 aa)) is the GST N-terminal domain. Positions 93 to 229 (DHPEYYKVIQ…FEERSKALDN (137 aa)) constitute a GST C-terminal domain.

The protein belongs to the GST superfamily.

The enzyme catalyses RX + glutathione = an S-substituted glutathione + a halide anion + H(+). In terms of biological role, involved in the oxidative stress response and detoxification. This Schizosaccharomyces pombe (strain 972 / ATCC 24843) (Fission yeast) protein is Glutathione S-transferase 1 (gst1).